The following is a 334-amino-acid chain: Serine/threonine-protein kinase SAPK3 (334 aa).

The Protein kinase domain maps to 5–261 (YEALKELGAG…IPEIKKHTWF (257 aa)). ATP-binding positions include 11-19 (LGAGNFGVA) and lysine 34. Aspartate 124 (proton acceptor) is an active-site residue.

It belongs to the protein kinase superfamily. Ser/Thr protein kinase family. Post-translationally, autophosphorylated in presence of Ca(2+). In terms of tissue distribution, expressed in leaves and maturing seeds, but not in roots and stems of field-grown plants.

The protein resides in the cytoplasm. Its subcellular location is the nucleus. It catalyses the reaction L-seryl-[protein] + ATP = O-phospho-L-seryl-[protein] + ADP + H(+). The enzyme catalyses L-threonyl-[protein] + ATP = O-phospho-L-threonyl-[protein] + ADP + H(+). Activated by phosphorylation. May play a role in signal transduction of hyperosmotic response. The sequence is that of Serine/threonine-protein kinase SAPK3 (SAPK3) from Oryza sativa subsp. indica (Rice).